The following is a 507-amino-acid chain: Fatty acid resistance protein FarB (507 aa).

Transmembrane regions (helical) follow at residues 8 to 28, 52 to 72, 78 to 98, 109 to 129, 136 to 156, 164 to 184, 199 to 219, 233 to 253, 274 to 294, 303 to 323, 334 to 354, 363 to 383, 399 to 419, and 478 to 498; these read GAALAWVTLSLGLAVFMEVLD, WVITSFSVANAVSVPLTGFLA, VKLFTAAAAGFVIASWLCGIA, ILQGFIAGPLIPLSQSLLMAS, MLALALWAMTVVVAPVLGPIL, WHWGWIFFINIPIGIISAWIT, PTDYVGLTLMMVGIGALQMML, IITLGITALVCLSYFIVWELG, IATSLGFMVYMGTLTLLPLVL, AWAGLAAAPVGILPVFLSPLI, LLVTASFLTFAFTFYWRTDFY, IWPQFWQGVGVAMFFLPLTTI, LSNFLRVLMGGVGVSVVSTLW, and IFLAGSILFIVLIPIVWLAKP.

This sequence belongs to the major facilitator superfamily. EmrB family. As to quaternary structure, probably part of a tripartite efflux system FarAB-MtrE, which is composed of an inner membrane transporter, FarB, a periplasmic membrane fusion protein, FarA, and an outer membrane component, MtrE.

The protein resides in the cell inner membrane. Mediates resistance to long-chained antibacterial fatty acids (FAs). Function is dependent on the MtrE outer membrane protein. In Neisseria gonorrhoeae, this protein is Fatty acid resistance protein FarB.